A 63-amino-acid polypeptide reads, in one-letter code: Putative conjugal transfer lipoprotein XF_a0011.1 (63 aa).

The N-terminal stretch at 1-15 (MRYTFGIVTVYLLAG) is a signal peptide. Cys16 carries N-palmitoyl cysteine lipidation. A lipid anchor (S-diacylglycerol cysteine) is attached at Cys16.

This sequence to B.suis ORF12 in VirB region.

It is found in the cell inner membrane. This is Putative conjugal transfer lipoprotein XF_a0011.1 from Xylella fastidiosa (strain 9a5c).